Consider the following 237-residue polypeptide: Phosphoribosylaminoimidazole-succinocarboxamide synthase (237 aa).

This sequence belongs to the SAICAR synthetase family.

The catalysed reaction is 5-amino-1-(5-phospho-D-ribosyl)imidazole-4-carboxylate + L-aspartate + ATP = (2S)-2-[5-amino-1-(5-phospho-beta-D-ribosyl)imidazole-4-carboxamido]succinate + ADP + phosphate + 2 H(+). Its pathway is purine metabolism; IMP biosynthesis via de novo pathway; 5-amino-1-(5-phospho-D-ribosyl)imidazole-4-carboxamide from 5-amino-1-(5-phospho-D-ribosyl)imidazole-4-carboxylate: step 1/2. This is Phosphoribosylaminoimidazole-succinocarboxamide synthase from Shigella dysenteriae serotype 1 (strain Sd197).